A 358-amino-acid chain; its full sequence is Snurportin-1 (358 aa).

At M1 the chain carries N-acetylmethionine. Disordered stretches follow at residues 1 to 39 (MEELSQALASSFSVSQELNSTAAPHPRLSQYKSKYSSLE) and 69 to 89 (DWTGMESGEEEKKKDEEEMDL). The interval 1-65 (MEELSQALAS…LDYVNHARRL (65 aa)) is necessary for interaction with KPNB1 and m3G-cap U1 and U5 snRNP import receptor activity. The tract at residues 1–160 (MEELSQALAS…NRFSSLLPGG (160 aa)) is necessary for interaction with XPO1. Polar residues-rich tracts occupy residues 7 to 22 (ALASSFSVSQELNSTA) and 30 to 39 (QYKSKYSSLE). Residues 11–73 (SFSVSQELNS…RLAEDDWTGM (63 aa)) enclose the IBB domain. S75 carries the post-translational modification Phosphoserine. The interval 128–130 (GKR) is interaction with m3G-cap structure. The tract at residues 210 to 329 (MNSKLPEEEG…DTKEKLTHKA (120 aa)) is necessary for binding to the m3G-cap structure. Basic and acidic residues predominate over residues 315-341 (KRSQEDTKEKLTHKASENGHYELEHLS). The interval 315 to 358 (KRSQEDTKEKLTHKASENGHYELEHLSTPKLRSPPHSSESLMDS) is disordered. The segment covering 349-358 (PHSSESLMDS) has biased composition (polar residues). Position 351 is a phosphoserine (S351).

It belongs to the snurportin family. In terms of assembly, component of an import snRNP complex composed of KPNB1, SNUPN, SMN1 and ZNF259. Component of a nuclear export receptor complex composed of KPNB1, Ran, SNUPN and XPO1. Found in a trimeric export complex with SNUPN, Ran and XPO1. Interacts (via IBB domain) with KPNB1; the interaction is direct. Interacts with DDX20, IPO7, SMN1, SNRPB and XPO1. Interacts directly with XPO1. Its interaction with XPO1 and binding to m3G-cap U snRNPs appears to be mutually exclusive. Can form homomers.

It is found in the nucleus. Its subcellular location is the cytoplasm. Its function is as follows. Functions as an U snRNP-specific nuclear import adapter. Involved in the trimethylguanosine (m3G)-cap-dependent nuclear import of U snRNPs. Binds specifically to the terminal m3G-cap U snRNAs. The sequence is that of Snurportin-1 (Snupn) from Rattus norvegicus (Rat).